The sequence spans 198 residues: DnaJ homolog subfamily C member 12 (198 aa).

An N-acetylmethionine modification is found at Met1. The region spanning 14–79 (DYYTLLGCDE…ASRARYDHWR (66 aa)) is the J domain. Residues 112 to 167 (MLEESDQTPTDKIENEEQDEQKEIKKEEFGSTTEKMEQKESKSVEKSFSPQNPDSP) are disordered. The segment covering 120–156 (PTDKIENEEQDEQKEIKKEEFGSTTEKMEQKESKSVE) has biased composition (basic and acidic residues). Phosphoserine is present on residues Ser160, Ser166, and Ser182.

As to quaternary structure, interacts with HSPA8. Interacts with TPH1. Interacts with TPH2.

It localises to the cytoplasm. Its function is as follows. Probable co-chaperone that participates in the proper folding of biopterin-dependent aromatic amino acid hydroxylases, which include phenylalanine-4-hydroxylase (PAH), tyrosine 3-monooxygenase (TH) and peripheral and neuronal tryptophan hydroxylases (TPH1 and TPH2). In Bos taurus (Bovine), this protein is DnaJ homolog subfamily C member 12 (DNAJC12).